Consider the following 137-residue polypeptide: Large ribosomal subunit protein uL13 (137 aa).

This sequence belongs to the universal ribosomal protein uL13 family. In terms of assembly, part of the 50S ribosomal subunit.

Functionally, this protein is one of the early assembly proteins of the 50S ribosomal subunit, although it is not seen to bind rRNA by itself. It is important during the early stages of 50S assembly. This chain is Large ribosomal subunit protein uL13, found in Methanocaldococcus jannaschii (strain ATCC 43067 / DSM 2661 / JAL-1 / JCM 10045 / NBRC 100440) (Methanococcus jannaschii).